The chain runs to 47 residues: GTGPVADLHIINKDLSPDGFQRPTVVAGGGRDVVSIGRAGDNVTIRF.

Residues 2-47 form the Plastocyanin-like domain; the sequence is TGPVADLHIINKDLSPDGFQRPTVVAGGGRDVVSIGRAGDNVTIRF.

It belongs to the multicopper oxidase family. In terms of assembly, homodimer. Cu cation serves as cofactor. Post-translationally, N-glycosylated; contains 17% carbohydrates.

It localises to the secreted. It carries out the reaction 4 hydroquinone + O2 = 4 benzosemiquinone + 2 H2O. Inhibited by sodium azide, SDS and mercaptoethanol, but not by 4-hexyl resocinol, L-cysteine and dithiothreitol. Activity is inhibited by the heavy metal ions Cr, W, Sn, Ag(+) and Hg(2+), but not by Pb(2+), Fe(3+), Ni(2+), Li(2+), Co(2+) or Cd(2+). In terms of biological role, lignin degradation and detoxification of lignin-derived products. Has highest activity towards ABTS, also active towards ferulic acid and guaiacol, but is not active towards tyrosine, vanillic acid, 2,5-dimethyl aniline, p-anisidine or violuric acid. The sequence is that of Laccase-2d from Cerrena unicolor (Canker rot fungus).